The primary structure comprises 462 residues: Argininosuccinate lyase (462 aa).

The protein belongs to the lyase 1 family. Argininosuccinate lyase subfamily.

The protein resides in the cytoplasm. It catalyses the reaction 2-(N(omega)-L-arginino)succinate = fumarate + L-arginine. The protein operates within amino-acid biosynthesis; L-arginine biosynthesis; L-arginine from L-ornithine and carbamoyl phosphate: step 3/3. The sequence is that of Argininosuccinate lyase from Streptococcus agalactiae serotype III (strain NEM316).